Reading from the N-terminus, the 202-residue chain is MLKLLKVSITGDLSSGKTEACQVFQELGAYVVSADEISHSFLIPHTRIGRRVIDLLGSDVVVDGAFDAQAIAAKVFYNSVLLQGLEAILHPEVCRIIEEQYHQSIQDGNYPLFVAEVPLLYEIHYAKWFDSVILVMANEDIRRERFMKKTGRSSEDFDQRCSRFLNVEEKLAQADVVVENNGTKKELHQKIEEYFYALKGAL.

In terms of domain architecture, DPCK spans 6–202; that stretch reads KVSITGDLSS…EYFYALKGAL (197 aa). Residue 14–19 participates in ATP binding; that stretch reads SSGKTE.

The protein belongs to the CoaE family.

It localises to the cytoplasm. It carries out the reaction 3'-dephospho-CoA + ATP = ADP + CoA + H(+). The protein operates within cofactor biosynthesis; coenzyme A biosynthesis; CoA from (R)-pantothenate: step 5/5. Its function is as follows. Catalyzes the phosphorylation of the 3'-hydroxyl group of dephosphocoenzyme A to form coenzyme A. The protein is Dephospho-CoA kinase of Chlamydia pneumoniae (Chlamydophila pneumoniae).